We begin with the raw amino-acid sequence, 261 residues long: Glucose 1-dehydrogenase A (261 aa).

11 to 35 lines the NADP(+) pocket; sequence VITGGSTGLGRAMAVRFGQEEAKVV. Serine 145 provides a ligand contact to substrate. Tyrosine 158 functions as the Proton acceptor in the catalytic mechanism.

The protein belongs to the short-chain dehydrogenases/reductases (SDR) family. In terms of assembly, homotetramer.

It carries out the reaction D-glucose + NAD(+) = D-glucono-1,5-lactone + NADH + H(+). The catalysed reaction is D-glucose + NADP(+) = D-glucono-1,5-lactone + NADPH + H(+). The chain is Glucose 1-dehydrogenase A (gdhA) from Priestia megaterium (Bacillus megaterium).